Here is a 199-residue protein sequence, read N- to C-terminus: Chaperone protein TorD (199 aa).

The protein belongs to the TorD/DmsD family. TorD subfamily.

The protein localises to the cytoplasm. In terms of biological role, involved in the biogenesis of TorA. Acts on TorA before the insertion of the molybdenum cofactor and, as a result, probably favors a conformation of the apoenzyme that is competent for acquiring the cofactor. The protein is Chaperone protein TorD of Escherichia coli O139:H28 (strain E24377A / ETEC).